We begin with the raw amino-acid sequence, 297 residues long: Formamidopyrimidine-DNA glycosylase (297 aa).

Residue proline 2 is the Schiff-base intermediate with DNA of the active site. Glutamate 3 functions as the Proton donor in the catalytic mechanism. The active-site Proton donor; for beta-elimination activity is the lysine 58. DNA-binding residues include histidine 106, arginine 125, and arginine 168. Residues 259 to 295 (RVYDREGLACTARGCRGVVRRVVQSGRSTFFCEVCQP) form an FPG-type zinc finger. Arginine 285 (proton donor; for delta-elimination activity) is an active-site residue.

It belongs to the FPG family. In terms of assembly, monomer. Zn(2+) serves as cofactor.

The enzyme catalyses Hydrolysis of DNA containing ring-opened 7-methylguanine residues, releasing 2,6-diamino-4-hydroxy-5-(N-methyl)formamidopyrimidine.. It carries out the reaction 2'-deoxyribonucleotide-(2'-deoxyribose 5'-phosphate)-2'-deoxyribonucleotide-DNA = a 3'-end 2'-deoxyribonucleotide-(2,3-dehydro-2,3-deoxyribose 5'-phosphate)-DNA + a 5'-end 5'-phospho-2'-deoxyribonucleoside-DNA + H(+). Involved in base excision repair of DNA damaged by oxidation or by mutagenic agents. Acts as a DNA glycosylase that recognizes and removes damaged bases. Has a preference for oxidized purines, such as 7,8-dihydro-8-oxoguanine (8-oxoG). Has AP (apurinic/apyrimidinic) lyase activity and introduces nicks in the DNA strand. Cleaves the DNA backbone by beta-delta elimination to generate a single-strand break at the site of the removed base with both 3'- and 5'-phosphates. The polypeptide is Formamidopyrimidine-DNA glycosylase (Methylobacterium nodulans (strain LMG 21967 / CNCM I-2342 / ORS 2060)).